A 222-amino-acid polypeptide reads, in one-letter code: MQSVLVLAAIVPAALAQTYYGCYTEIPTRALTGAVPLIDYEAMTLADCEAHCTGFDLWGLEYGGECYCGNSLAQGSFPAFSTDCTMPCPGDATLTSVCGGPNRLSLYGTSETAPESLPYPHDPPVTTTQYEGCYTEVTEGARALAGASGFSLTDMTVGGCGGYCRDSGFTWFGLEYSAECYCGSELSVNSTLAAEEDCAMPCSGAAGEVCGGSNRLSVYQWV.

2 WSC domains span residues 16-110 and 127-222; these read AQTY…YGTS and TTQY…YQWV.

In terms of biological role, inhibits the growth of the fungus P.tritici-repentis. This is Putative fungistatic metabolite from Chaetomium globosum (strain ATCC 6205 / CBS 148.51 / DSM 1962 / NBRC 6347 / NRRL 1970) (Soil fungus).